The following is a 1336-amino-acid chain: SH3 domain and tetratricopeptide repeat-containing protein 1 (1336 aa).

At Met1 the chain carries N-acetylmethionine. 2 disordered regions span residues 1–76 (MENL…PPCQ) and 225–266 (TGPR…SEEV). Residues 18-27 (GPVGPSGGGS) are compositionally biased toward gly residues. The span at 46-61 (AGPEEAKAPVRGDEAP) shows a compositional bias: basic and acidic residues. Low complexity-rich tracts occupy residues 62 to 74 (PARV…GTPP) and 247 to 266 (EAAP…SEEV). Residues 305-368 (MAVGLASALA…RSSLISMQGP (64 aa)) enclose the SH3 domain. 8 TPR repeats span residues 560 to 593 (ARLC…LEGS), 601 to 634 (VAVY…LLGT), 665 to 698 (ARAC…HRDS), 786 to 819 (GPLY…SAIA), 863 to 896 (GVIA…ARDL), 946 to 979 (THVL…AVEM), 1027 to 1063 (GQLL…FIDL), and 1192 to 1225 (RVAY…CNSP). Tyr1248 carries the post-translational modification Phosphotyrosine. The stretch at 1277–1311 (LKIYTRLATIYHNFLLDREKSLFFYQKARTFATEL) is one TPR 9 repeat.

In Homo sapiens (Human), this protein is SH3 domain and tetratricopeptide repeat-containing protein 1 (SH3TC1).